A 581-amino-acid chain; its full sequence is Zinc metalloproteinase nas-36 (581 aa).

The propeptide occupies 1-95 (MKEIAHSQAY…FRGANEKGKR (95 aa)). Asparagine 67 carries N-linked (GlcNAc...) asparagine glycosylation. Positions 97 to 290 (AAEYDAKWFQ…IKLINEAYCK (194 aa)) constitute a Peptidase M12A domain. Cystine bridges form between cysteine 137-cysteine 289, cysteine 159-cysteine 178, cysteine 293-cysteine 313, cysteine 315-cysteine 324, and cysteine 336-cysteine 364. Histidine 186 serves as a coordination point for Zn(2+). Glutamate 187 is a catalytic residue. Residues histidine 190 and histidine 196 each coordinate Zn(2+). Positions 285–325 (NEAYCKGDCKEKNECKNGGYLNPSNCQSCLCPSGFGGSKCE) constitute an EGF-like domain. The 114-residue stretch at 336–449 (CGGTLKAIID…TGFKLKFRKT (114 aa)) folds into the CUB domain. The N-linked (GlcNAc...) asparagine glycan is linked to asparagine 418. One can recognise a TSP type-1 domain in the interval 474-523 (NDIWSEWGEWSQCSRSCGACGIKSRLRICKTAQCSGKVQQFLTCNLQACP). Cystine bridges form between cysteine 486–cysteine 517, cysteine 490–cysteine 522, and cysteine 502–cysteine 507.

The cofactor is Zn(2+).

It is found in the secreted. Inhibited by 1,10-phenanthroline. In terms of biological role, metalloprotease. Involved in molting, a process during larval stages in which a new cuticle is formed and the old cuticle is shed. The sequence is that of Zinc metalloproteinase nas-36 from Brugia malayi (Filarial nematode worm).